The sequence spans 779 residues: Endonuclease MutS2 (779 aa).

328–335 (GPNTGGKT) provides a ligand contact to ATP. The region spanning 704-779 (LDLRGKRYEE…GSGATIVTLG (76 aa)) is the Smr domain.

It belongs to the DNA mismatch repair MutS family. MutS2 subfamily. In terms of assembly, homodimer. Binds to stalled ribosomes, contacting rRNA.

In terms of biological role, endonuclease that is involved in the suppression of homologous recombination and thus may have a key role in the control of bacterial genetic diversity. Functionally, acts as a ribosome collision sensor, splitting the ribosome into its 2 subunits. Detects stalled/collided 70S ribosomes which it binds and splits by an ATP-hydrolysis driven conformational change. Acts upstream of the ribosome quality control system (RQC), a ribosome-associated complex that mediates the extraction of incompletely synthesized nascent chains from stalled ribosomes and their subsequent degradation. Probably generates substrates for RQC. In Streptococcus pyogenes serotype M5 (strain Manfredo), this protein is Endonuclease MutS2.